The sequence spans 362 residues: Chorismate synthase (362 aa).

Residues arginine 48 and arginine 54 each contribute to the NADP(+) site. FMN contacts are provided by residues arginine 125–serine 127, asparagine 238–alanine 239, glycine 278, lysine 293–serine 297, and arginine 319.

It belongs to the chorismate synthase family. In terms of assembly, homotetramer. Requires FMNH2 as cofactor.

It carries out the reaction 5-O-(1-carboxyvinyl)-3-phosphoshikimate = chorismate + phosphate. It functions in the pathway metabolic intermediate biosynthesis; chorismate biosynthesis; chorismate from D-erythrose 4-phosphate and phosphoenolpyruvate: step 7/7. Its function is as follows. Catalyzes the anti-1,4-elimination of the C-3 phosphate and the C-6 proR hydrogen from 5-enolpyruvylshikimate-3-phosphate (EPSP) to yield chorismate, which is the branch point compound that serves as the starting substrate for the three terminal pathways of aromatic amino acid biosynthesis. This reaction introduces a second double bond into the aromatic ring system. This Aeromonas salmonicida (strain A449) protein is Chorismate synthase.